The chain runs to 101 residues: Small ribosomal subunit protein uS14 (101 aa).

This sequence belongs to the universal ribosomal protein uS14 family. As to quaternary structure, part of the 30S ribosomal subunit. Contacts proteins S3 and S10.

Functionally, binds 16S rRNA, required for the assembly of 30S particles and may also be responsible for determining the conformation of the 16S rRNA at the A site. This chain is Small ribosomal subunit protein uS14, found in Methylobacterium sp. (strain 4-46).